The chain runs to 852 residues: Genome polyprotein (852 aa).

2 short sequence motifs ((L)YPX(n)L motif) span residues 167–171 (YPHGL) and 200–205 (YPVWEL). The tract at residues 766–836 (MMSRIAAGDL…PRKMKGLFSQ (71 aa)) is involved in P1-2A pentamerization.

Belongs to the picornaviridae polyprotein family. Homodimer. Homomultimer; probably interacts with membranes in a multimeric form. Seems to assemble into amyloid-like fibers. In terms of assembly, homopentamer. Homooligomer. As to quaternary structure, interacts with capsid protein VP2. Interacts with capsid protein VP3. Interacts with capsid protein VP1. Interacts with capsid protein VP3. In terms of assembly, interacts with capsid protein VP1. Interacts with capsid protein VP2. Post-translationally, specific enzymatic cleavages by viral protease in vivo yield a variety of precursors and mature proteins. Polyprotein processing intermediates are produced, such as P1-2A which is a functional precursor of the structural proteins, VP0 which is a VP4-VP2 precursor, VP1-2A precursor, 3ABC precursor which is a stable and catalytically active precursor of 3A, 3B and 3C proteins, 3AB and 3CD precursors. The assembly signal 2A is removed from VP1-2A by a host protease, possibly host Cathepsin L. This cleavage occurs over a region of 3 amino-acids probably generating VP1 proteins with heterogeneous C-termini. In terms of processing, during virion maturation, immature virions are rendered infectious following cleavage of VP0 into VP4 and VP2. This maturation seems to be an autocatalytic event triggered by the presence of RNA in the capsid and is followed by a conformational change of the particle. The assembly signal 2A is removed from VP1-2A by a host protease, possibly host Cathepsin L in naked virions. This cleavage does not occur in enveloped virions. This cleavage occurs over a region of 3 amino-acids probably generating VP1 proteins with heterogeneous C-termini. Post-translationally, viral protein genome-linked: VPg is uridylylated prior to priming replication into VPg-pUpU. In terms of processing, unlike other picornaviruses, does not seem to be myristoylated.

It is found in the virion. The protein localises to the host endosome. Its subcellular location is the host multivesicular body. It localises to the host membrane. Capsid proteins VP1, VP2, and VP3 form a closed capsid enclosing the viral positive strand RNA genome. All these proteins contain a beta-sheet structure called beta-barrel jelly roll. Together they form an icosahedral capsid (T=3) composed of 60 copies of each VP1, VP2, and VP3, with a diameter of approximately 300 Angstroms. VP1 is situated at the 12 fivefold axes, whereas VP2 and VP3 are located at the quasi-sixfold axes. The naked capsid interacts with the host receptor HAVCR1 to provide virion attachment to and probably entry into the target cell. Functionally, VP0 precursor is a component of the immature procapsids. In terms of biological role, plays a role in the assembly of the 12 pentamers into an icosahedral structure. Has not been detected in mature virions, supposedly owing to its small size. Its function is as follows. Precursor component of immature procapsids that corresponds to an extended form of the structural protein VP1. After maturation, possibly by the host Cathepsin L, the assembly signal 2A is cleaved to give rise to the mature VP1 protein. Affects membrane integrity and causes an increase in membrane permeability. Functionally, functions as a viroporin. Affects membrane integrity and causes an increase in membrane permeability. Involved in host intracellular membrane rearrangements probably to give rise to the viral factories. Does not disrupt calcium homeostasis or glycoprotein trafficking. Antagonizes the innate immune response of the host by suppressing IFN-beta synthesis, which it achieves by interfering with the RIG-I/IFIH1 pathway. This Cercopithecus hamlyni (Owl-faced monkey) protein is Genome polyprotein.